The sequence spans 396 residues: Stearoyl-[acyl-carrier-protein] 9-desaturase, chloroplastic (396 aa).

The N-terminal 33 residues, 1 to 33 (MALKLNPFLSQTQKLPSFALPPMASTRSPKFYM), are a transit peptide targeting the chloroplast. E138, E176, H179, E229, E262, and H265 together coordinate Fe cation.

Belongs to the fatty acid desaturase type 2 family. Homodimer. It depends on Fe(2+) as a cofactor. As to expression, higher levels in developing seeds than in leaf and root tissues.

Its subcellular location is the plastid. The protein localises to the chloroplast. It carries out the reaction octadecanoyl-[ACP] + 2 reduced [2Fe-2S]-[ferredoxin] + O2 + 2 H(+) = (9Z)-octadecenoyl-[ACP] + 2 oxidized [2Fe-2S]-[ferredoxin] + 2 H2O. It functions in the pathway lipid metabolism; fatty acid metabolism. Functionally, converts stearoyl-ACP to oleoyl-ACP by introduction of a cis double bond between carbons 9 and 10 of the acyl chain. The chain is Stearoyl-[acyl-carrier-protein] 9-desaturase, chloroplastic from Ricinus communis (Castor bean).